Here is a 103-residue protein sequence, read N- to C-terminus: Hexon-interlacing protein (103 aa).

Residues 25–45 form a disordered region; it reads RQNVTGSDLGGKPVPSDVLES. Residues 72–99 adopt a coiled-coil conformation; it reads LDDLKTQVAAMQNSVTAIQEELKDLKQR.

It belongs to the adenoviridae hexon-interlacing protein family. Homotrimer. Interacts with hexon protein; this interaction tethers the hexons together. Self-interacts with adjacent proteins. Interacts with kinesin light chain KLC1; this interaction leads to capsid disruption at the nuclear pore complex during virus entry into host cell.

The protein localises to the virion. Its subcellular location is the host nucleus. Structural component of the virion that acts as a cement protein on the capsid exterior and forms triskelion structures consisting of three molecules that stabilize three hexon trimers at the center of each icosahedral facet and fixes the peripentonal hexons. Dispensable for assembly. During virus entry, recruits the anterograde motor kinesin-1 to the capsid docked at the nuclear pore complex thereby subjecting the docked capsid to a pulling force. The resulting tension leads to capsid disruption, dispersion of capsid fragments toward cell periphery and eventually viral DNA entry into the host nucleus. In Canine adenovirus serotype 1 (strain CLL) (CAdV-1), this protein is Hexon-interlacing protein.